A 452-amino-acid chain; its full sequence is Transcription factor SMP1 (452 aa).

Positions Arg3 to Tyr57 constitute an MADS-box domain. The mef2-type DNA-binding region spans Ser58–Asp87. Positions Asn97 to Asp142 are disordered. Residues Ser115–Ser127 show a composition bias toward low complexity.

Belongs to the MEF2 family. In terms of assembly, can heterodimerize with RLM1. Interacts with HOG1. Phosphorylated by HOG1.

The protein localises to the nucleus. Transcription factor that controls part of the HOG1-mediated osmostress responses. Binds to the DNA sequence 5'-ACTACTA[TA](4)TAG-3'. Does not appear to function in the MPK1 pathway. The protein is Transcription factor SMP1 (SMP1) of Saccharomyces cerevisiae (strain ATCC 204508 / S288c) (Baker's yeast).